We begin with the raw amino-acid sequence, 363 residues long: Trans-2,3-enoyl-CoA reductase-like (363 aa).

Phosphoserine is present on S37. The next 3 helical transmembrane spans lie at 143–163 (WTTV…LFYL), 217–237 (LIMS…YINH), and 311–331 (ISFT…LMSI).

It belongs to the steroid 5-alpha reductase family. As to expression, predominantly expressed in the heart and skeletal muscle.

It localises to the membrane. It is found in the endoplasmic reticulum. The chain is Trans-2,3-enoyl-CoA reductase-like (TECRL) from Homo sapiens (Human).